Consider the following 1375-residue polypeptide: DNA-directed RNA polymerase subunit beta (1375 aa).

This sequence belongs to the RNA polymerase beta chain family. In terms of assembly, the RNAP catalytic core consists of 2 alpha, 1 beta, 1 beta' and 1 omega subunit. When a sigma factor is associated with the core the holoenzyme is formed, which can initiate transcription.

It carries out the reaction RNA(n) + a ribonucleoside 5'-triphosphate = RNA(n+1) + diphosphate. Its function is as follows. DNA-dependent RNA polymerase catalyzes the transcription of DNA into RNA using the four ribonucleoside triphosphates as substrates. This is DNA-directed RNA polymerase subunit beta from Campylobacter jejuni subsp. jejuni serotype O:6 (strain 81116 / NCTC 11828).